Reading from the N-terminus, the 626-residue chain is Glyco-Gag protein (626 aa).

At 1–66 the chain is on the cytoplasmic side; the sequence is LGDVPGTSGA…SVWNRSRAAR (66 aa). Residues 67–86 traverse the membrane as a helical segment; it reads LVCCSIVLCCLCLTVFLYLS. At 87-626 the chain is on the extracellular side; that stretch reads ENMGQAVTTP…PQASLLTLDD (540 aa). N-linked (GlcNAc...) asparagine; by host glycosylation is present at asparagine 113. 2 stretches are compositionally biased toward pro residues: residues 198–212 and 249–261; these read PPSA…PLST and DPPP…PPSP. Disordered regions lie at residues 198–306 and 522–626; these read PPSA…FPLR and RETP…TLDD. Basic and acidic residues-rich tracts occupy residues 522 to 554 and 574 to 607; these read RETP…EKER and RQDR…DCPK. Positions 526-566 form a coiled coil; that stretch reads EEREERIRRETEEKEERRRAEDVQREKERDRRRHREMSKLL. The segment at 590–607 adopts a CCHC-type zinc-finger fold; sequence DQCAYCKEKGHWARDCPK.

Post-translationally, glycosylated by host. In terms of processing, cleaved by host near the middle of the molecule, releasing the c-terminal half containing capsid and nucleoprotein domains op GAG.

The protein resides in the host cell membrane. Plays a role in viral particle release. Presumably acts by facilitating the fission of the virion bud at the cell surface. May prevent the antiviral activity of murine APOBEC3. This chain is Glyco-Gag protein, found in Mus musculus (Mouse).